Reading from the N-terminus, the 4043-residue chain is Polyketide synthase-nonribosomal peptide synthetase (4043 aa).

In terms of domain architecture, Ketosynthase family 3 (KS3) spans 8-446; the sequence is SEPIAIIGTG…GANSHAILES (439 aa). Residues Cys181, His320, and His366 each act as for beta-ketoacyl synthase activity in the active site. Residues 557–877 form an acyl transferase region; it reads VFTGQGAQWA…SRGNSDVEAF (321 aa). Positions 944 to 1078 are N-terminal hotdog fold; sequence NELLGRQVLD…CRLRITVGDS (135 aa). Residues 944–1246 form the PKS/mFAS DH domain; the sequence is NELLGRQVLD…TQPLSSPTEA (303 aa). Residues 945–1243 are dehydratase (DH) domain; that stretch reads ELLGRQVLDG…GLQTQPLSSP (299 aa). His976 (proton acceptor; for dehydratase activity) is an active-site residue. The segment at 1093 to 1246 is C-terminal hotdog fold; it reads LLEVESDRFY…TQPLSSPTEA (154 aa). The Proton donor; for dehydratase activity role is filled by Asp1154. A methyltransferase (MT) domain region spans residues 1400–1585; that stretch reads RYTKYLAAMA…GIETAIPHHD (186 aa). Positions 2115–2288 are ketoreductase (KR)domain; it reads TYWLVGLTGG…NASAVHIGAI (174 aa). The Carrier 1 domain occupies 2394–2475; the sequence is SSSADIYDII…EMVTQAQELL (82 aa). The segment at 2395-2472 is peptidyl carrier protein; it reads SSADIYDIIS…TVGEMVTQAQ (78 aa). Ser2435 is subject to O-(pantetheine 4'-phosphoryl)serine. Disordered regions lie at residues 2476-2575 and 2587-2630; these read PKEL…DPSR and EKHL…SQII. Polar residues-rich tracts occupy residues 2494-2512 and 2520-2534; these read PKNT…QLQN and ALSQ…NMIK. A compositionally biased stretch (basic and acidic residues) spans 2537 to 2550; it reads PPKEAEAKQPRPEV. Residues 2617–2627 show a composition bias toward low complexity; the sequence is TSSSSSSTSAS. The condensation stretch occupies residues 2640 to 3069; that stretch reads KSVPMAFGQS…NPALRLNVPP (430 aa). The tract at residues 3102–3502 is adenylation; it reads EIVERYPTHV…EGNLILGGRI (401 aa). The Carrier 2 domain maps to 3617 to 3697; the sequence is TDESPSMAKM…GMVSLIDHSE (81 aa). Residues 3622 to 3694 are thiolation; that stretch reads SMAKMRDVWA…SLTGMVSLID (73 aa). Residue Ser3657 is modified to O-(pantetheine 4'-phosphoryl)serine. The segment at 3735-3954 is reductase-like; that stretch reads LTGATGFLGR…DFVSADRVAM (220 aa).

It in the C-terminal section; belongs to the NRP synthetase family.

It participates in mycotoxin biosynthesis. Hybrid PKS-NRPS synthetase; part of the gene cluster that mediates the biosynthesis of the mycotoxins cytochalasins E and K. The hybrid PKS-NRPS synthetase ccsA and the enoyl reductase ccsC are responsible for fusion of phenylalanine with an octaketide backbone and subsequent release of the stable tetramic acid precursor. The polyketide synthase module (PKS) of the PKS-NRPS ccsA is responsible for the synthesis of the octaketide backbone. The downstream nonribosomal peptide synthetase (NRPS) amidates the carboxyl end of the octaketide with a phenylalanine. A reductase-like domain (R) at the C-terminus catalyzes the reductive release of the polyketide-amino acid intermediate. Because ccsA lacks a designated enoylreductase (ER) domain, the required activity is provided the enoyl reductase ccsC. Upon formation of the 11-membered carbocycle-fused perhydroisoindolone intermediate, a number of oxidative steps are required to afford the final cytochalasin E and K, including two hydroxylations at C17 and C18, one alcohol oxidation at C17, one epoxidation at C6 and C7 and two Baeyer-Villiger oxidations. The oxidative modification at C17, C18 and the C6-C7 epoxidation are likely to be catalyzed by the two cytochrome P450 oxygenases ccsD and ccsG. CcsD may be responsible for the epoxidation of the C6-C7 double bond. CcsG may be responsible for the successive oxidative modifications at C17 and C18. The double Baeyer-Villiger oxidations of ketocytochalasin to precytochalasin and cytochalasin Z(16) are among the final steps leading to cytochalasin E and K and are catalyzed by ccsB. The first oxygen insertion step follows that of the classic BVMO mechanism, generating the ester precytochalasin. Release of precytochalasin into an aqueous environment can generate the shunt product iso-precytochalasin through spontaneous isomerization. Alternatively, precytochalasin can undergo further oxidation by ccsB to yield the in-line carbonate-containing cytochalasin Z(16). Cytochalasin Z(16) is a precursor to cytochalasin E and cytochalasin K, whereas iso-precytochalasin is a precursor to cytochalasin Z(17) and rosellichalasin. The hydrolyase ccsE may catalyze hydrolysis of epoxide bond in cytochalasin E to afford cytochalasin K. The function of ccsF has not been assigned but it may play a role in post-PKS-NRPS biosynthetic step, resistance or transport of cytochalasins and related PKS-NRPS products. This chain is Polyketide synthase-nonribosomal peptide synthetase, found in Aspergillus clavatus (strain ATCC 1007 / CBS 513.65 / DSM 816 / NCTC 3887 / NRRL 1 / QM 1276 / 107).